The chain runs to 449 residues: Required for meiotic nuclear division protein 1 homolog (449 aa).

A mitochondrion-targeting transit peptide spans methionine 1–serine 12.

The protein belongs to the RMD1/sif2 family. In terms of assembly, homooligomer.

The protein localises to the mitochondrion. Its function is as follows. Required for mitochondrial translation, possibly by coordinating the assembly or maintenance of the mitochondrial ribosome. The chain is Required for meiotic nuclear division protein 1 homolog (RMND1) from Homo sapiens (Human).